We begin with the raw amino-acid sequence, 369 residues long: 4-hydroxyproline betaine 2-epimerase (369 aa).

Tyr-56 and Gln-162 together coordinate substrate. Lys-164 serves as the catalytic Proton donor/acceptor. Mg(2+)-binding residues include Asp-194, Glu-219, and Asp-242. The Proton donor/acceptor role is filled by Lys-266. Ala-295 provides a ligand contact to substrate.

It belongs to the mandelate racemase/muconate lactonizing enzyme family. The cofactor is Mg(2+).

The enzyme catalyses trans-4-hydroxy-L-proline betaine = cis-4-hydroxy-D-proline betaine. It catalyses the reaction L-proline betaine = D-proline betaine. Catalyzes the 2-epimerization of trans-4-hydroxy-L-proline betaine (tHyp-B) to cis-4-hydroxy-D-proline betaine (cHyp-B). Is involved in a catabolic pathway that degrades tHyp-B to alpha-ketoglutarate. This pathway would permit the utilization of tHyp-B as a carbon and nitrogen source in the absence of osmotic stress, since tHyp-B functions as an osmolyte and is not catabolized when it is needed as osmoprotectant. Can also catalyze the racemization of L-proline betaine. This chain is 4-hydroxyproline betaine 2-epimerase (hpbD), found in Paracoccus denitrificans (strain Pd 1222).